Here is a 272-residue protein sequence, read N- to C-terminus: Regulatory protein RecX (272 aa).

It belongs to the RecX family.

It localises to the cytoplasm. In terms of biological role, modulates RecA activity. The protein is Regulatory protein RecX of Oceanobacillus iheyensis (strain DSM 14371 / CIP 107618 / JCM 11309 / KCTC 3954 / HTE831).